Here is a 607-residue protein sequence, read N- to C-terminus: Elongation factor 4 (607 aa).

The tr-type G domain occupies 11–193 (ENIRNFSIIA…KIVEVVPAPD (183 aa)). GTP-binding positions include 23-28 (DHGKST) and 140-143 (NKID).

This sequence belongs to the TRAFAC class translation factor GTPase superfamily. Classic translation factor GTPase family. LepA subfamily.

It is found in the cell membrane. The catalysed reaction is GTP + H2O = GDP + phosphate + H(+). In terms of biological role, required for accurate and efficient protein synthesis under certain stress conditions. May act as a fidelity factor of the translation reaction, by catalyzing a one-codon backward translocation of tRNAs on improperly translocated ribosomes. Back-translocation proceeds from a post-translocation (POST) complex to a pre-translocation (PRE) complex, thus giving elongation factor G a second chance to translocate the tRNAs correctly. Binds to ribosomes in a GTP-dependent manner. The sequence is that of Elongation factor 4 from Staphylococcus aureus (strain N315).